The sequence spans 720 residues: Engulfment and cell motility protein 2 (720 aa).

Residue tyrosine 48 is modified to Phosphotyrosine. An ELMO domain is found at 311–485 (AQRDIIFELR…VVREQITRAL (175 aa)). Phosphoserine is present on serine 503. The region spanning 553–674 (SSFRKIGNRR…LLGKDMSSEL (122 aa)) is the PH domain. An SH3-binding motif is present at residues 700–707 (PEAPPPIP). A Phosphotyrosine modification is found at tyrosine 717.

In terms of assembly, interacts with the SH3-domain of DOCK1 via its SH3-binding site. Probably part of a complex with DOCK1 and RAC1. Probably part of a complex with DOCK1 and CRK isoform CRK-II. Interacts with ARHGEF16, DOCK4 and EPHA2; mediates activation of RAC1 by EPHA2. Interacts with ADGRB3. Interacts with AUTS2; the interaction is direct. As to expression, widely expressed, with a higher expression in skeletal muscle, kidney and placenta.

It localises to the cytoplasm. Its subcellular location is the cytosol. The protein localises to the membrane. Functionally, involved in cytoskeletal rearrangements required for phagocytosis of apoptotic cells and cell motility. Acts in association with DOCK1 and CRK. Was initially proposed to be required in complex with DOCK1 to activate Rac Rho small GTPases. May enhance the guanine nucleotide exchange factor (GEF) activity of DOCK1. In Homo sapiens (Human), this protein is Engulfment and cell motility protein 2 (ELMO2).